Here is a 581-residue protein sequence, read N- to C-terminus: MNIQKFLLKKIHRALLAITNESFFHLIQVQQSTKRKFGNYQINGLIAISKKLNIPIEEFAKKFIQFINLNDVAHTIKIEKPGFINIFLNTKWISNQINNIFSASHLGITPATPKTIVIDYSGPNVAKEMHVGHLRSTVIGDSIARVLSFLGHNVIRANHIGDWGTQFGMLIAYIEKNAQTRFLLNKTIQLSTLEHFYREAKKKYDIDPDFAELSRNYVLKLQKGDKHYRQIWKYLVDISILNNQDIYVRLNINLKKSDIIGESFYNDMLPDIVSDLKNKGLAVTSNGATVVFLENYHNKLGTPFGVIIQKKDGAYLYSTTDIACIKYRCKVLHADRIIYYIDSRQKQHLIQAWEIADKAGYIEKSVLLEHHMCGMLLGKDGKPFKTRAGNALKLKTLLDEALERARCLILSKNPNLKYTEINKLAHIISIGAIKYSELSKNRITDYIFDWNNMLNFEGNTAPYVQYACTRIFAIFKRSKQPNFQLKKNDIQLETEEEILLAICLLQFEEMIVAVSNQGAPHILCSYLYKLSVLFSSFYENCPIIKAHNTHIKYSRLKLALITMRTLKTGLNLLGIKTVRYM.

Residues 123-133 carry the 'HIGH' region motif; sequence PNVAKEMHVGH.

This sequence belongs to the class-I aminoacyl-tRNA synthetase family. Monomer.

Its subcellular location is the cytoplasm. The enzyme catalyses tRNA(Arg) + L-arginine + ATP = L-arginyl-tRNA(Arg) + AMP + diphosphate. The chain is Arginine--tRNA ligase from Blochmanniella pennsylvanica (strain BPEN).